Here is a 319-residue protein sequence, read N- to C-terminus: tRNA-modifying protein YgfZ (319 aa).

Folate contacts are provided by Trp-27 and Trp-189.

This sequence belongs to the tRNA-modifying YgfZ family.

The protein localises to the cytoplasm. In terms of biological role, folate-binding protein involved in regulating the level of ATP-DnaA and in the modification of some tRNAs. It is probably a key factor in regulatory networks that act via tRNA modification, such as initiation of chromosomal replication. This is tRNA-modifying protein YgfZ from Buchnera aphidicola subsp. Acyrthosiphon pisum (strain APS) (Acyrthosiphon pisum symbiotic bacterium).